The following is a 675-amino-acid chain: PTS system glucose-specific EIICBA component (675 aa).

The PTS EIIC type-1 domain maps to 3-414; it reads KKLFGQMQRI…FNYKTPGRED (412 aa). Transmembrane regions (helical) follow at residues 16-36, 59-79, 81-101, 126-146, 170-190, 211-231, 273-293, 303-323, 328-348, 355-375, and 378-398; these read LMLP…GTAF, MLTG…ALGV, IGLA…FIIL, VLGI…GALA, FVPI…AIIW, LAVF…LHHI, FMQG…LAIY, VVAG…ITEP, FLFV…LSFL, VHLG…GILP, and TAWW…YFVF. Positions 425–506 constitute a PTS EIIB type-1 domain; it reads SQLPFDVLKA…AKIISGEITK (82 aa). Residue C447 is the Phosphocysteine intermediate; for EIIB activity of the active site. Residues 547-651 form the PTS EIIA type-1 domain; it reads DKVFSEKMMG…SIITPVIITN (105 aa). H599 acts as the Tele-phosphohistidine intermediate; for EIIA activity in catalysis.

The protein resides in the cell membrane. It catalyses the reaction N(pros)-phospho-L-histidyl-[protein] + D-glucose(out) = D-glucose 6-phosphate(in) + L-histidyl-[protein]. The phosphoenolpyruvate-dependent sugar phosphotransferase system (sugar PTS), a major carbohydrate active transport system, catalyzes the phosphorylation of incoming sugar substrates concomitantly with their translocation across the cell membrane. This system is involved in glucose transport. The protein is PTS system glucose-specific EIICBA component (ptsG) of Staphylococcus epidermidis.